The primary structure comprises 520 residues: Leucine carboxyl methyltransferase 1 (520 aa).

2 disordered regions span residues 1–116 and 142–174; these read MQRD…DDAV and TQEF…SIRR. The segment covering 79–89 has biased composition (low complexity); the sequence is PSLRLSLGLPR. Polar residues-rich tracts occupy residues 95-110 and 142-151; these read HSGQ…STAR and TQEFSSTLPS. Residues Arg-185, Gly-210, Asp-237, 305 to 306, and Glu-343 each bind S-adenosyl-L-methionine; that span reads DV.

This sequence belongs to the methyltransferase superfamily. LCMT family.

The catalysed reaction is [phosphatase 2A protein]-C-terminal L-leucine + S-adenosyl-L-methionine = [phosphatase 2A protein]-C-terminal L-leucine methyl ester + S-adenosyl-L-homocysteine. Methylates the carboxyl group of the C-terminal leucine residue of protein phosphatase 2A catalytic subunits to form alpha-leucine ester residues. This Mycosarcoma maydis (Corn smut fungus) protein is Leucine carboxyl methyltransferase 1 (PPM1).